A 229-amino-acid chain; its full sequence is UPF0173 metal-dependent hydrolase SERP1270 (229 aa).

This sequence belongs to the UPF0173 family.

This chain is UPF0173 metal-dependent hydrolase SERP1270, found in Staphylococcus epidermidis (strain ATCC 35984 / DSM 28319 / BCRC 17069 / CCUG 31568 / BM 3577 / RP62A).